Consider the following 283-residue polypeptide: 4-hydroxy-3-methylbut-2-enyl diphosphate reductase (283 aa).

[4Fe-4S] cluster is bound at residue Cys12. (2E)-4-hydroxy-3-methylbut-2-enyl diphosphate-binding residues include His40 and His72. Dimethylallyl diphosphate-binding residues include His40 and His72. The isopentenyl diphosphate site is built by His40 and His72. Position 94 (Cys94) interacts with [4Fe-4S] cluster. His122 serves as a coordination point for (2E)-4-hydroxy-3-methylbut-2-enyl diphosphate. His122 is a binding site for dimethylallyl diphosphate. His122 provides a ligand contact to isopentenyl diphosphate. Glu124 (proton donor) is an active-site residue. Thr160 is a (2E)-4-hydroxy-3-methylbut-2-enyl diphosphate binding site. Residue Cys188 coordinates [4Fe-4S] cluster. (2E)-4-hydroxy-3-methylbut-2-enyl diphosphate-binding residues include Ser216, Asn218, and Ser259. Residues Ser216, Asn218, and Ser259 each coordinate dimethylallyl diphosphate. Isopentenyl diphosphate-binding residues include Ser216, Asn218, and Ser259.

The protein belongs to the IspH family. [4Fe-4S] cluster serves as cofactor.

The catalysed reaction is isopentenyl diphosphate + 2 oxidized [2Fe-2S]-[ferredoxin] + H2O = (2E)-4-hydroxy-3-methylbut-2-enyl diphosphate + 2 reduced [2Fe-2S]-[ferredoxin] + 2 H(+). The enzyme catalyses dimethylallyl diphosphate + 2 oxidized [2Fe-2S]-[ferredoxin] + H2O = (2E)-4-hydroxy-3-methylbut-2-enyl diphosphate + 2 reduced [2Fe-2S]-[ferredoxin] + 2 H(+). The protein operates within isoprenoid biosynthesis; dimethylallyl diphosphate biosynthesis; dimethylallyl diphosphate from (2E)-4-hydroxy-3-methylbutenyl diphosphate: step 1/1. Its pathway is isoprenoid biosynthesis; isopentenyl diphosphate biosynthesis via DXP pathway; isopentenyl diphosphate from 1-deoxy-D-xylulose 5-phosphate: step 6/6. Its function is as follows. Catalyzes the conversion of 1-hydroxy-2-methyl-2-(E)-butenyl 4-diphosphate (HMBPP) into a mixture of isopentenyl diphosphate (IPP) and dimethylallyl diphosphate (DMAPP). Acts in the terminal step of the DOXP/MEP pathway for isoprenoid precursor biosynthesis. This Dictyoglomus thermophilum (strain ATCC 35947 / DSM 3960 / H-6-12) protein is 4-hydroxy-3-methylbut-2-enyl diphosphate reductase.